The sequence spans 313 residues: Biotin synthase (313 aa).

Residues 38–262 enclose the Radical SAM core domain; sequence REVQISTLLS…TMPHARVRLS (225 aa). Positions 53, 57, and 60 each coordinate [4Fe-4S] cluster. The [2Fe-2S] cluster site is built by C97, C128, C188, and R260.

The protein belongs to the radical SAM superfamily. Biotin synthase family. Homodimer. The cofactor is [4Fe-4S] cluster. [2Fe-2S] cluster is required as a cofactor.

The catalysed reaction is (4R,5S)-dethiobiotin + (sulfur carrier)-SH + 2 reduced [2Fe-2S]-[ferredoxin] + 2 S-adenosyl-L-methionine = (sulfur carrier)-H + biotin + 2 5'-deoxyadenosine + 2 L-methionine + 2 oxidized [2Fe-2S]-[ferredoxin]. It participates in cofactor biosynthesis; biotin biosynthesis; biotin from 7,8-diaminononanoate: step 2/2. Functionally, catalyzes the conversion of dethiobiotin (DTB) to biotin by the insertion of a sulfur atom into dethiobiotin via a radical-based mechanism. The protein is Biotin synthase of Granulibacter bethesdensis (strain ATCC BAA-1260 / CGDNIH1).